We begin with the raw amino-acid sequence, 165 residues long: Growth arrest and DNA damage-inducible protein GADD45 alpha (165 aa).

Position 2 is a phosphothreonine (Thr-2).

Belongs to the GADD45 family. As to quaternary structure, interacts with MAPK14. Predominantly monomeric but also forms dimers and other oligomers as concentration increases. Interacts with GADD45GIP1. Interacts weakly with PCNA. Interacts with AURKA, likely to compete with dimerization.

Its subcellular location is the nucleus. Its function is as follows. In T-cells, functions as a regulator of p38 MAPKs by inhibiting p88 phosphorylation and activity. Might affect PCNA interaction with some CDK (cell division protein kinase) complexes; stimulates DNA excision repair in vitro and inhibits entry of cells into S phase. The sequence is that of Growth arrest and DNA damage-inducible protein GADD45 alpha (GADD45A) from Homo sapiens (Human).